We begin with the raw amino-acid sequence, 305 residues long: Methionyl-tRNA formyltransferase (305 aa).

110 to 113 (SLLP) contributes to the (6S)-5,6,7,8-tetrahydrofolate binding site.

The protein belongs to the Fmt family.

It carries out the reaction L-methionyl-tRNA(fMet) + (6R)-10-formyltetrahydrofolate = N-formyl-L-methionyl-tRNA(fMet) + (6S)-5,6,7,8-tetrahydrofolate + H(+). Functionally, attaches a formyl group to the free amino group of methionyl-tRNA(fMet). The formyl group appears to play a dual role in the initiator identity of N-formylmethionyl-tRNA by promoting its recognition by IF2 and preventing the misappropriation of this tRNA by the elongation apparatus. The chain is Methionyl-tRNA formyltransferase from Ureaplasma parvum serovar 3 (strain ATCC 700970).